The sequence spans 874 residues: Alanine--tRNA ligase (874 aa).

Positions 564, 568, 665, and 669 each coordinate Zn(2+).

The protein belongs to the class-II aminoacyl-tRNA synthetase family. It depends on Zn(2+) as a cofactor.

It is found in the cytoplasm. The enzyme catalyses tRNA(Ala) + L-alanine + ATP = L-alanyl-tRNA(Ala) + AMP + diphosphate. Catalyzes the attachment of alanine to tRNA(Ala) in a two-step reaction: alanine is first activated by ATP to form Ala-AMP and then transferred to the acceptor end of tRNA(Ala). Also edits incorrectly charged Ser-tRNA(Ala) and Gly-tRNA(Ala) via its editing domain. The polypeptide is Alanine--tRNA ligase (Burkholderia mallei (strain ATCC 23344)).